A 527-amino-acid polypeptide reads, in one-letter code: NAD(P)H-quinone oxidoreductase chain 4 1 (527 aa).

14 consecutive transmembrane segments (helical) span residues 5 to 25 (FPWLTTIILFPIVASLLLPII), 35 to 55 (WYSLIVGLIDFAIIIAAFCTG), 90 to 110 (LIILTGFITTLAIMAAWPVSF), 112 to 132 (PKLFYFLMLAMYGGQIAVFAV), 136 to 156 (LLFFLVWELELVPVYLILSIW), 168 to 188 (FILYTAGGSLFILIAALTMAF), 211 to 231 (LLLYAAFLIAYAVKLPIFPLH), 242 to 262 (TAPAHMLLAGILLKMGGYALL), 274 to 294 (AVFAPVLVILGVVNIVYAALT), 310 to 330 (ISHMGFVLIGMASFTDIGLSG), 331 to 351 (AVLQMISHGLIGASLFFLVGA), 386 to 406 (LALPGMSGFVAEVMVFIGFAT), 416 to 436 (VLVIFLSAVGVILTPIYLLSM), and 463 to 483 (VFIIGCLLVPIIGIGLYPKIV).

Belongs to the complex I subunit 4 family.

The protein localises to the cellular thylakoid membrane. The enzyme catalyses a plastoquinone + NADH + (n+1) H(+)(in) = a plastoquinol + NAD(+) + n H(+)(out). It catalyses the reaction a plastoquinone + NADPH + (n+1) H(+)(in) = a plastoquinol + NADP(+) + n H(+)(out). Functionally, NDH-1 shuttles electrons from NAD(P)H, via FMN and iron-sulfur (Fe-S) centers, to quinones in the respiratory chain. The immediate electron acceptor for the enzyme in this species is believed to be plastoquinone. Couples the redox reaction to proton translocation (for every two electrons transferred, four hydrogen ions are translocated across the cytoplasmic membrane), and thus conserves the redox energy in a proton gradient. The sequence is that of NAD(P)H-quinone oxidoreductase chain 4 1 from Trichodesmium erythraeum (strain IMS101).